The sequence spans 74 residues: DNA-directed RNA polymerase subunit omega (74 aa).

Belongs to the RNA polymerase subunit omega family. The RNAP catalytic core consists of 2 alpha, 1 beta, 1 beta' and 1 omega subunit. When a sigma factor is associated with the core the holoenzyme is formed, which can initiate transcription.

It catalyses the reaction RNA(n) + a ribonucleoside 5'-triphosphate = RNA(n+1) + diphosphate. Promotes RNA polymerase assembly. Latches the N- and C-terminal regions of the beta' subunit thereby facilitating its interaction with the beta and alpha subunits. The polypeptide is DNA-directed RNA polymerase subunit omega (Hydrogenovibrio crunogenus (strain DSM 25203 / XCL-2) (Thiomicrospira crunogena)).